Consider the following 397-residue polypeptide: Elongation factor Tu (397 aa).

A tr-type G domain is found at 10-206 (KPHVNIGTIG…ACDDYIPEPV (197 aa)). Residues 19-26 (GHIDHGKT) are G1. GTP is bound at residue 19–26 (GHIDHGKT). Threonine 26 contributes to the Mg(2+) binding site. Residues 62 to 66 (GITIS) are G2. Residues 83–86 (DCPG) form a G3 region. Residues 83–87 (DCPGH) and 138–141 (NKAD) contribute to the GTP site. Positions 138 to 141 (NKAD) are G4. A G5 region spans residues 176-178 (SAL).

It belongs to the TRAFAC class translation factor GTPase superfamily. Classic translation factor GTPase family. EF-Tu/EF-1A subfamily. Monomer.

The protein resides in the cytoplasm. The enzyme catalyses GTP + H2O = GDP + phosphate + H(+). Its function is as follows. GTP hydrolase that promotes the GTP-dependent binding of aminoacyl-tRNA to the A-site of ribosomes during protein biosynthesis. This Acidothermus cellulolyticus (strain ATCC 43068 / DSM 8971 / 11B) protein is Elongation factor Tu.